The chain runs to 212 residues: Uracil phosphoribosyltransferase (212 aa).

5-phospho-alpha-D-ribose 1-diphosphate is bound by residues Arg-78, Arg-103, and 130-138 (DPMLATGGS). Uracil is bound by residues Ile-193 and 198–200 (GDA). A 5-phospho-alpha-D-ribose 1-diphosphate-binding site is contributed by Asp-199.

The protein belongs to the UPRTase family. Mg(2+) serves as cofactor.

It catalyses the reaction UMP + diphosphate = 5-phospho-alpha-D-ribose 1-diphosphate + uracil. Its pathway is pyrimidine metabolism; UMP biosynthesis via salvage pathway; UMP from uracil: step 1/1. Its activity is regulated as follows. Allosterically activated by GTP. Catalyzes the conversion of uracil and 5-phospho-alpha-D-ribose 1-diphosphate (PRPP) to UMP and diphosphate. The polypeptide is Uracil phosphoribosyltransferase (Pseudomonas entomophila (strain L48)).